The primary structure comprises 157 residues: Protein Smg homolog (157 aa).

Belongs to the Smg family.

The chain is Protein Smg homolog from Shewanella loihica (strain ATCC BAA-1088 / PV-4).